A 189-amino-acid polypeptide reads, in one-letter code: Hypoxanthine/guanine phosphoribosyltransferase (189 aa).

Belongs to the purine/pyrimidine phosphoribosyltransferase family. Archaeal HPRT subfamily. In terms of assembly, homodimer.

It localises to the cytoplasm. It carries out the reaction IMP + diphosphate = hypoxanthine + 5-phospho-alpha-D-ribose 1-diphosphate. The enzyme catalyses GMP + diphosphate = guanine + 5-phospho-alpha-D-ribose 1-diphosphate. The protein operates within purine metabolism; IMP biosynthesis via salvage pathway; IMP from hypoxanthine: step 1/1. Functionally, catalyzes a salvage reaction resulting in the formation of IMP that is energically less costly than de novo synthesis. The polypeptide is Hypoxanthine/guanine phosphoribosyltransferase (hpt) (Methanosarcina acetivorans (strain ATCC 35395 / DSM 2834 / JCM 12185 / C2A)).